The primary structure comprises 167 residues: UPF0225 protein VP1145 (167 aa).

Belongs to the UPF0225 family.

This chain is UPF0225 protein VP1145, found in Vibrio parahaemolyticus serotype O3:K6 (strain RIMD 2210633).